A 415-amino-acid chain; its full sequence is D-threonate kinase (415 aa).

Residues D9, R53, and 81–84 (KIDS) each bind substrate. ATP contacts are provided by residues S251, 345–348 (GGET), and G392.

The protein belongs to the four-carbon acid sugar kinase family.

It catalyses the reaction D-threonate + ATP = 4-O-phospho-D-threonate + ADP + H(+). Functionally, catalyzes the ATP-dependent phosphorylation of D-threonate to D-threonate 4-phosphate. Can also phosphorylate 4-hydroxy-L-threonine, with lower efficiency. In Cupriavidus necator (strain ATCC 17699 / DSM 428 / KCTC 22496 / NCIMB 10442 / H16 / Stanier 337) (Ralstonia eutropha), this protein is D-threonate kinase.